We begin with the raw amino-acid sequence, 97 residues long: Large ribosomal subunit protein bL27 (97 aa).

The segment at 1–23 is disordered; that stretch reads MAHKKGASSSRNGRDSTSKRLGV.

This sequence belongs to the bacterial ribosomal protein bL27 family.

In Acidothermus cellulolyticus (strain ATCC 43068 / DSM 8971 / 11B), this protein is Large ribosomal subunit protein bL27.